We begin with the raw amino-acid sequence, 109 residues long: Nucleoid-associated protein SO_2014 (109 aa).

The protein belongs to the YbaB/EbfC family. In terms of assembly, homodimer.

It localises to the cytoplasm. It is found in the nucleoid. Binds to DNA and alters its conformation. May be involved in regulation of gene expression, nucleoid organization and DNA protection. This is Nucleoid-associated protein SO_2014 from Shewanella oneidensis (strain ATCC 700550 / JCM 31522 / CIP 106686 / LMG 19005 / NCIMB 14063 / MR-1).